The primary structure comprises 160 residues: Cyclic pyranopterin monophosphate synthase (160 aa).

Residues 75–77 (LCH) and 113–114 (ME) contribute to the substrate site. The active site involves D128.

Belongs to the MoaC family. As to quaternary structure, homohexamer; trimer of dimers.

The enzyme catalyses (8S)-3',8-cyclo-7,8-dihydroguanosine 5'-triphosphate = cyclic pyranopterin phosphate + diphosphate. It functions in the pathway cofactor biosynthesis; molybdopterin biosynthesis. Functionally, catalyzes the conversion of (8S)-3',8-cyclo-7,8-dihydroguanosine 5'-triphosphate to cyclic pyranopterin monophosphate (cPMP). This chain is Cyclic pyranopterin monophosphate synthase, found in Haemophilus influenzae (strain PittEE).